The sequence spans 232 residues: Putative KilA-N domain-containing protein 315L (232 aa).

The KilA-N domain maps to 15 to 119 (NFYYGLFRDF…SSASGVVYVV (105 aa)).

The chain is Putative KilA-N domain-containing protein 315L from Acheta domesticus (House cricket).